A 339-amino-acid polypeptide reads, in one-letter code: Transcription factor IIIA (339 aa).

9 C2H2-type zinc fingers span residues 12–36 (FICS…LCKH), 42–66 (FPCT…VLSH), 72–97 (CKCE…KRAH), 104–128 (YVCY…QYIH), 134–158 (FKCS…EKTH), 161–187 (YPCR…AELH), 190–212 (VTCS…KKIH), 219–244 (YRCP…LTFH), and 250–274 (FVCE…FNTH). Positions 271–339 (FNTHDPEKKK…LPVLENLTLK (69 aa)) are disordered. Basic residues predominate over residues 299-309 (KPKKSKKKKKP). Residues 311 to 323 (QTPAMESQEQQPD) are compositionally biased toward polar residues.

Its subcellular location is the nucleus. Involved in ribosomal large subunit biogenesis. Interacts with the internal control region (ICR) of approximately 50 bases within the 5S RNA genes, is required for correct transcription of these genes by RNA polymerase III. Also binds the transcribed 5S RNA's. The chain is Transcription factor IIIA (gtf3a) from Anaxyrus americanus (American toad).